We begin with the raw amino-acid sequence, 147 residues long: Low molecular weight protein-tyrosine-phosphatase Wzb (147 aa).

Residue Cys9 is the Nucleophile of the active site. The active site involves Arg15. Catalysis depends on Asp115, which acts as the Proton donor.

Belongs to the low molecular weight phosphotyrosine protein phosphatase family.

It carries out the reaction O-phospho-L-tyrosyl-[protein] + H2O = L-tyrosyl-[protein] + phosphate. The protein operates within glycan metabolism; exopolysaccharide biosynthesis. Its function is as follows. Dephosphorylates Wzc. Required for the extracellular polysaccharide colanic acid synthesis. Probably involved in the export of colanic acid from the cell to medium. Involved in protection of cells against contact-dependent growth inhibition (CDI). This chain is Low molecular weight protein-tyrosine-phosphatase Wzb (wzb), found in Escherichia coli O157:H7.